The primary structure comprises 222 residues: UPF0441 protein CKO_04429 (222 aa).

The segment covering 177 to 194 (TVPKTAMAPKPATTTTVT) has biased composition (low complexity). The tract at residues 177 to 222 (TVPKTAMAPKPATTTTVTRGGFGESVAKQSTMQRSATGTSNRSMGG) is disordered. Residues 203-222 (AKQSTMQRSATGTSNRSMGG) show a composition bias toward polar residues.

It belongs to the UPF0441 family.

The sequence is that of UPF0441 protein CKO_04429 from Citrobacter koseri (strain ATCC BAA-895 / CDC 4225-83 / SGSC4696).